We begin with the raw amino-acid sequence, 141 residues long: Hemoglobin subunit alpha (141 aa).

Positions 1–141 (VLSPADKTNV…VSTVLTSKYR (141 aa)) constitute a Globin domain. Ser-3 carries the post-translational modification Phosphoserine. Lys-7 bears the N6-succinyllysine mark. Thr-8 carries the phosphothreonine modification. Lys-11 is subject to N6-succinyllysine. Lys-16 is modified (N6-acetyllysine; alternate). Position 16 is an N6-succinyllysine; alternate (Lys-16). Tyr-24 is subject to Phosphotyrosine. Ser-35 carries the phosphoserine modification. Position 40 is an N6-succinyllysine (Lys-40). His-58 contacts O2. His-87 contributes to the heme b binding site. Ser-102 carries the post-translational modification Phosphoserine. At Thr-108 the chain carries Phosphothreonine. Residues Ser-124 and Ser-131 each carry the phosphoserine modification. A phosphothreonine mark is found at Thr-134 and Thr-137. Ser-138 carries the post-translational modification Phosphoserine.

Belongs to the globin family. In terms of assembly, heterotetramer of two alpha chains and two beta chains. In terms of tissue distribution, red blood cells.

Involved in oxygen transport from the lung to the various peripheral tissues. Functionally, hemopressin acts as an antagonist peptide of the cannabinoid receptor CNR1. Hemopressin-binding efficiently blocks cannabinoid receptor CNR1 and subsequent signaling. The polypeptide is Hemoglobin subunit alpha (HBA) (Cynopterus sphinx (Indian short-nosed fruit bat)).